Consider the following 221-residue polypeptide: Ras-related protein Rab-28 (221 aa).

Ser-2 carries the N-acetylserine modification. At Ser-8 the chain carries Phosphoserine. 9 residues coordinate GTP: Gly-21, Gly-24, Lys-25, Thr-26, Ser-27, Gly-38, Lys-39, Tyr-41, and Thr-44. Thr-26 is a Mg(2+) binding site. The tract at residues 35–49 (ETFGKRYKQTIGLDF) is switch I. Positions 44 and 68 each coordinate Mg(2+). The tract at residues 68-85 (DIGGQTIGGKMLDKYIYG) is switch II. The GTP site is built by Gly-71, Asn-129, Lys-130, Asp-132, Ala-160, and Lys-161. A Cysteine methyl ester modification is found at Cys-218. Cys-218 carries the S-farnesyl cysteine lipid modification. The propeptide at 219–221 (AVQ) is removed in mature form.

Belongs to the small GTPase superfamily. Rab family. Interacts (prenylated form) with PDE6D; the interaction promotes RAB28 delivery to the photoreceptor outer segments. Interacts with KCNJ13; the interaction may facilitate cone outer segments phagocytosis. Also participates in nuclear factor kappa-B p65/RELA nuclear transport in endothelial cells. Mg(2+) serves as cofactor. Post-translationally, isoprenylated.

The protein localises to the cell membrane. The protein resides in the cytoplasm. Its subcellular location is the cytoskeleton. It is found in the cilium basal body. It localises to the nucleus. The enzyme catalyses GTP + H2O = GDP + phosphate + H(+). Regulated by guanine nucleotide exchange factors (GEFs) which promote the exchange of bound GDP for free GTP. Regulated by GTPase activating proteins (GAPs) which increase the GTP hydrolysis activity. Inhibited by GDP dissociation inhibitors (GDIs). Functionally, the small GTPases Rab are key regulators of intracellular membrane trafficking, from the formation of transport vesicles to their fusion with membranes. Rabs cycle between an inactive GDP-bound form and an active GTP-bound form that is able to recruit to membranes different sets of downstream effectors directly responsible for vesicle formation, movement, tethering and fusion. RAB28 is required for shedding and phagocytosis of cone cell outer segments (OS) discs in the retina. Also participates in nuclear factor kappa-B p65/RELA nuclear transport in endothelial cells. The chain is Ras-related protein Rab-28 (RAB28) from Pongo abelii (Sumatran orangutan).